Here is a 133-residue protein sequence, read N- to C-terminus: MGQLKIKDKSQREGYKPNQAIAILRYAHISPLKARLVLREIHGKDVGEALYLLKVIPKRAARIAEKLLKSAIANAEQKGLDLDRLYIKKAVADRGPILKKWIPRAHGRATMVRKRLSHITIVLEEKPEGKEEE.

The protein belongs to the universal ribosomal protein uL22 family. As to quaternary structure, part of the 50S ribosomal subunit.

This protein binds specifically to 23S rRNA; its binding is stimulated by other ribosomal proteins, e.g. L4, L17, and L20. It is important during the early stages of 50S assembly. It makes multiple contacts with different domains of the 23S rRNA in the assembled 50S subunit and ribosome. Functionally, the globular domain of the protein is located near the polypeptide exit tunnel on the outside of the subunit, while an extended beta-hairpin is found that lines the wall of the exit tunnel in the center of the 70S ribosome. The protein is Large ribosomal subunit protein uL22 of Aquifex pyrophilus.